The primary structure comprises 111 residues: Large ribosomal subunit protein uL22 (111 aa).

It belongs to the universal ribosomal protein uL22 family. Part of the 50S ribosomal subunit.

In terms of biological role, this protein binds specifically to 23S rRNA; its binding is stimulated by other ribosomal proteins, e.g. L4, L17, and L20. It is important during the early stages of 50S assembly. It makes multiple contacts with different domains of the 23S rRNA in the assembled 50S subunit and ribosome. Its function is as follows. The globular domain of the protein is located near the polypeptide exit tunnel on the outside of the subunit, while an extended beta-hairpin is found that lines the wall of the exit tunnel in the center of the 70S ribosome. In Clostridium tetani (strain Massachusetts / E88), this protein is Large ribosomal subunit protein uL22.